Here is a 338-residue protein sequence, read N- to C-terminus: Very-long-chain 3-oxoacyl-CoA reductase (338 aa).

The helical transmembrane segment at 20 to 40 (LSAFLLVMGSIGVGRVIYQTL) threads the bilayer. Residues V66, N95, D120, N147, Y214, K218, V247, and S249 each contribute to the NADP(+) site. Y214 functions as the Proton donor in the catalytic mechanism. Catalysis depends on K218, which acts as the Lowers pKa of active site Tyr.

This sequence belongs to the short-chain dehydrogenases/reductases (SDR) family.

It is found in the endoplasmic reticulum membrane. The catalysed reaction is a very-long-chain (3R)-3-hydroxyacyl-CoA + NADP(+) = a very-long-chain 3-oxoacyl-CoA + NADPH + H(+). It participates in lipid metabolism; fatty acid biosynthesis. Component of the microsomal membrane bound fatty acid elongation system, which produces the 26-carbon very long-chain fatty acids (VLCFA) from palmitate. Catalyzes the reduction of the 3-ketoacyl-CoA intermediate that is formed in each cycle of fatty acid elongation. VLCFAs serve as precursors for ceramide and sphingolipids. The protein is Very-long-chain 3-oxoacyl-CoA reductase of Laccaria bicolor (strain S238N-H82 / ATCC MYA-4686) (Bicoloured deceiver).